The primary structure comprises 449 residues: Galactosyl transferase CpsE (449 aa).

Helical transmembrane passes span 5-22, 27-46, 59-78, 88-107, and 258-280; these read VVVYFSASLTLTLITPNF, DLLFVLLIHYIVFYLSDFYR, MVLKYSFYYIFISSSLFFIF, SFFTFIAMNSILLYLLNSFL, and FLDITGAIIGLLICGIVAIFLVP.

The protein belongs to the bacterial sugar transferase family.

Its subcellular location is the cell membrane. Functionally, galactosyl transferase is essential for the assembly of the group B streptococci (GBS) type III capsular polysaccharide. May be involved in the formation of either or both galactosidic bonds by catalyzing the addition of galactose to an oligosaccharide precursor or to a lipid intermediate. Type III capsular polysaccharide consists of a linear backbone with short side chains ending in residues of N-acetylneuraminic acid or sialic acid. The presence of sialic acid on the surface of the organism inhibits activation of the alternative pathway of complement and is thought to be an important element in the virulence function of the capsule. The sequence is that of Galactosyl transferase CpsE (cpsE) from Streptococcus agalactiae serotype III (strain NEM316).